The primary structure comprises 99 residues: Large ribosomal subunit protein uL23 (99 aa).

It belongs to the universal ribosomal protein uL23 family. Part of the 50S ribosomal subunit. Contacts protein L29, and trigger factor when it is bound to the ribosome.

In terms of biological role, one of the early assembly proteins it binds 23S rRNA. One of the proteins that surrounds the polypeptide exit tunnel on the outside of the ribosome. Forms the main docking site for trigger factor binding to the ribosome. This Azotobacter vinelandii (strain DJ / ATCC BAA-1303) protein is Large ribosomal subunit protein uL23.